The chain runs to 387 residues: Cysteine desulfurase (387 aa).

Residues 72-73 (GT), Asn-152, Gln-180, and 200-202 (SAH) contribute to the pyridoxal 5'-phosphate site. Lys-203 is subject to N6-(pyridoxal phosphate)lysine. Thr-238 serves as a coordination point for pyridoxal 5'-phosphate. Catalysis depends on Cys-326, which acts as the Cysteine persulfide intermediate. Residue Cys-326 coordinates [2Fe-2S] cluster.

Belongs to the class-V pyridoxal-phosphate-dependent aminotransferase family. NifS/IscS subfamily. As to quaternary structure, homodimer. It depends on pyridoxal 5'-phosphate as a cofactor.

It carries out the reaction (sulfur carrier)-H + L-cysteine = (sulfur carrier)-SH + L-alanine. Functionally, catalyzes the removal of elemental sulfur atoms from cysteine to produce alanine. Seems to participate in the biosynthesis of the nitrogenase metalloclusters by providing the inorganic sulfur required for the Fe-S core formation. This Sinorhizobium fredii (strain NBRC 101917 / NGR234) protein is Cysteine desulfurase.